We begin with the raw amino-acid sequence, 804 residues long: Phenylalanine--tRNA ligase beta subunit (804 aa).

Residues 39–155 (AEGLKKIVVG…ADVKPGEEVY (117 aa)) enclose the tRNA-binding domain. Residues 408–483 (RNPSVVKTTV…RIYGYDNLKS (76 aa)) form the B5 domain. Positions 461, 467, 470, and 471 each coordinate Mg(2+). In terms of domain architecture, FDX-ACB spans 711-804 (PKFPAIERDL…LKESLKIKVR (94 aa)).

Belongs to the phenylalanyl-tRNA synthetase beta subunit family. Type 1 subfamily. Tetramer of two alpha and two beta subunits. The cofactor is Mg(2+).

It is found in the cytoplasm. The catalysed reaction is tRNA(Phe) + L-phenylalanine + ATP = L-phenylalanyl-tRNA(Phe) + AMP + diphosphate + H(+). This Lactobacillus johnsonii (strain CNCM I-12250 / La1 / NCC 533) protein is Phenylalanine--tRNA ligase beta subunit.